The sequence spans 267 residues: MNTREKYLSNVNRLVIKVGSSTLTHPSGLLNFYKIEHIVRQIADLHNQGIKVILVSSGAIGAGIGKLRLKERPKTIPEKQAAAAVGQGVLMHTYEKLFAEYGQIVGQILITREDLSSKKRVVNVQNTFSALLDHGIIPIVNENDATVVEEIKFGDNDTLSARVASLIKADLLILLSDIDGLYDSNPAVNKNAVLIDTVNEVNEEVKASAGGAGSKLGTGGMATKIRAAEIATENGISMVIANGEKQEAIRNILNFENEGTLFIPKNK.

Position 17 (lysine 17) interacts with ATP. The substrate site is built by serine 57, aspartate 144, and asparagine 156. Residues 176-177 and 218-224 each bind ATP; these read SD and TGGMATK.

This sequence belongs to the glutamate 5-kinase family.

The protein localises to the cytoplasm. The catalysed reaction is L-glutamate + ATP = L-glutamyl 5-phosphate + ADP. It participates in amino-acid biosynthesis; L-proline biosynthesis; L-glutamate 5-semialdehyde from L-glutamate: step 1/2. Functionally, catalyzes the transfer of a phosphate group to glutamate to form L-glutamate 5-phosphate. This Clostridium acetobutylicum (strain ATCC 824 / DSM 792 / JCM 1419 / IAM 19013 / LMG 5710 / NBRC 13948 / NRRL B-527 / VKM B-1787 / 2291 / W) protein is Glutamate 5-kinase.